A 223-amino-acid chain; its full sequence is MIVFGLSGGAGSGKSTVAAMFAQSCNAAVFDADKIVHSMYSGDAIITGLVAKYFPDCICNGVVSRERLSKHFFSYGPLWLEFQSILHSIVLRQQRKFILEQGKIGRDYAVLDVPLLLEAGFWRCCDFVINVDVHKSLQWHRLRQRGLSEREIEFLLSLQMPRGSRRNFADFYVNCGGRKGEVLKSVLQIVGSLNAGRHRFRVARKKLAMRSALDRRASTMASA.

Positions 3–204 (VFGLSGGAGS…AGRHRFRVAR (202 aa)) constitute a DPCK domain. 11 to 16 (GSGKST) lines the ATP pocket.

The protein belongs to the CoaE family.

It localises to the cytoplasm. It catalyses the reaction 3'-dephospho-CoA + ATP = ADP + CoA + H(+). Its pathway is cofactor biosynthesis; coenzyme A biosynthesis; CoA from (R)-pantothenate: step 5/5. Functionally, catalyzes the phosphorylation of the 3'-hydroxyl group of dephosphocoenzyme A to form coenzyme A. This chain is Dephospho-CoA kinase, found in Anaplasma marginale (strain St. Maries).